A 114-amino-acid polypeptide reads, in one-letter code: Mediator of RNA polymerase II transcription subunit 11 (114 aa).

A coiled-coil region spans residues 28-61 (LELSKEKANASLLDRQLNQFQTSINRVESELSSQ).

This sequence belongs to the Mediator complex subunit 11 family. Component of the Mediator complex. Ubiquitously expressed at early stage of development. After fertilization expressed in head region as well as in lateral line primordium.

The protein localises to the nucleus. Its function is as follows. Component of the Mediator complex, a coactivator involved in the regulated transcription of nearly all RNA polymerase II-dependent genes. Mediator functions as a bridge to convey information from gene-specific regulatory proteins to the basal RNA polymerase II transcription machinery. Mediator is recruited to promoters by direct interactions with regulatory proteins and serves as a scaffold for the assembly of a functional pre-initiation complex with RNA polymerase II and the general transcription factors. This is Mediator of RNA polymerase II transcription subunit 11 (med11) from Danio rerio (Zebrafish).